Consider the following 351-residue polypeptide: Probable sugar phosphate/phosphate translocator At5g11230 (351 aa).

10 consecutive transmembrane segments (helical) span residues 15 to 35 (IVLS…VIVY), 49 to 69 (FPIS…FLII), 89 to 109 (VVPI…AYIY), 113 to 133 (SFIQ…GVLF), 141 to 161 (DTMM…YGEA), 165 to 185 (VWGV…LVLI), 205 to 225 (VAPC…FPVL), 236 to 256 (AIFG…FLLV), 263 to 283 (TMNV…WSVI), and 286 to 306 (TVTP…AYYN). One can recognise an EamA domain in the interval 38 to 156 (YILDKKMYNW…LSISFGVAIA (119 aa)). Residues 321–351 (KKIQQADEESGRLLEEREGDVEGKKNDQSGN) form a disordered region.

This sequence belongs to the TPT transporter family. TPT (TC 2.A.7.9) subfamily.

The protein localises to the membrane. The protein is Probable sugar phosphate/phosphate translocator At5g11230 of Arabidopsis thaliana (Mouse-ear cress).